The sequence spans 190 residues: D-glycero-beta-D-manno-heptose-1,7-bisphosphate 7-phosphatase (190 aa).

Asp-11 acts as the Nucleophile in catalysis. Asp-11 and Asp-13 together coordinate Mg(2+). Residues 11-13 (DRD), 19-22 (DHGY), and 53-56 (TNQS) each bind substrate. Asp-13 serves as the catalytic Proton donor. Zn(2+) is bound by residues Cys-92, His-94, Cys-107, and Cys-109. Position 110–111 (110–111 (RK)) interacts with substrate. Residues Asp-136 and Lys-137 each contribute to the Mg(2+) site. Lys-137 contacts substrate.

It belongs to the GmhB family. As to quaternary structure, monomer. Mg(2+) serves as cofactor. Requires Zn(2+) as cofactor.

Its subcellular location is the cytoplasm. It catalyses the reaction D-glycero-beta-D-manno-heptose 1,7-bisphosphate + H2O = D-glycero-beta-D-manno-heptose 1-phosphate + phosphate. The protein operates within nucleotide-sugar biosynthesis; ADP-L-glycero-beta-D-manno-heptose biosynthesis; ADP-L-glycero-beta-D-manno-heptose from D-glycero-beta-D-manno-heptose 7-phosphate: step 2/4. Its pathway is bacterial outer membrane biogenesis; LPS core biosynthesis. Functionally, converts the D-glycero-beta-D-manno-heptose 1,7-bisphosphate intermediate into D-glycero-beta-D-manno-heptose 1-phosphate by removing the phosphate group at the C-7 position. The sequence is that of D-glycero-beta-D-manno-heptose-1,7-bisphosphate 7-phosphatase (gmhB) from Escherichia coli O6:H1 (strain CFT073 / ATCC 700928 / UPEC).